A 65-amino-acid polypeptide reads, in one-letter code: Trypsin inhibitor 1 (65 aa).

Cystine bridges form between Cys-39/Cys-56, Cys-46/Cys-58, and Cys-52/Cys-64.

Belongs to the protease inhibitor I7 (squash-type serine protease inhibitor) family.

The protein resides in the secreted. Functionally, inhibits trypsin. The protein is Trypsin inhibitor 1 of Trichosanthes kirilowii (Chinese snake gourd).